Consider the following 836-residue polypeptide: Ethylene receptor 3 (836 aa).

Transmembrane regions (helical) follow at residues 137–157 (LIAAAYFSIPLEILYFVAGLR), 166–186 (LVQFGAFIVLCGLTHLLTAFT), and 204–224 (LTALVSFLTAITLLTLIPQLL). Cu cation contacts are provided by Cys-176 and His-180. A GAF domain is found at 269–413 (DRHTVLYTTL…VVAGQVAVAL (145 aa)). The stretch at 416–452 (ATLLEESRAMRDRLAEQNRELLQARRDALMANEARQA) forms a coiled coil. Residues 457–691 (MSQGMRRPIH…LVLRFQLQSP (235 aa)) enclose the Histidine kinase domain. The Response regulatory domain maps to 718 to 834 (LLIDDDDDIN…LKDELARILQ (117 aa)).

This sequence belongs to the ethylene receptor family. It depends on Cu cation as a cofactor.

Its subcellular location is the endoplasmic reticulum membrane. The catalysed reaction is ATP + protein L-histidine = ADP + protein N-phospho-L-histidine.. In terms of biological role, ethylene receptor related to bacterial two-component regulators. Acts as a negative regulator of ethylene signaling. May delay the transition from the vegetative stage to the floral stage by up-regulating GI (GIGANTEA) and RCN1 and cause starch accumulation in stems by down-regulating the alpha-amylase AMY3D. This Oryza sativa subsp. indica (Rice) protein is Ethylene receptor 3.